The chain runs to 78 residues: Beta-defensin 105A (78 aa).

A signal peptide spans 1–27 (MALIRKTFYFLFAVFFVLVQLPSECQA). Disulfide bonds link Cys-43–Cys-74, Cys-53–Cys-67, and Cys-57–Cys-73.

It belongs to the beta-defensin family.

It is found in the secreted. Its function is as follows. Has antimicrobial activity. In Pongo pygmaeus (Bornean orangutan), this protein is Beta-defensin 105A (DEFB105A).